A 332-amino-acid polypeptide reads, in one-letter code: Heterogeneous nuclear ribonucleoprotein A/B (332 aa).

The tract at residues 1–66 (MSEAGEEQPM…DQINASKNEE (66 aa)) is disordered. Over residues 29–49 (GRGWTGAAAGAGGATAAPPSG) the composition is skewed to low complexity. RRM domains follow at residues 69–154 (GKMF…PVKK) and 153–233 (KKIF…QPKE). Serine 81 bears the Phosphoserine mark. Residues lysine 130 and lysine 203 each participate in a glycyl lysine isopeptide (Lys-Gly) (interchain with G-Cter in SUMO2) cross-link. N6-acetyllysine is present on lysine 215. Residues 235–268 (YQQQQYGSGGRGNRNRGNRGSGGGGGGGGQSQSW) form a disordered region. Phosphoserine is present on serine 242. Arginine 245 bears the Dimethylated arginine; alternate mark. An Omega-N-methylarginine; alternate modification is found at arginine 245. Arginine 250, glycine 251, arginine 253, and glycine 254 each carry omega-N-methylarginine. Residues 253-264 (RGSGGGGGGGGQ) are compositionally biased toward gly residues. Phosphoserine is present on residues serine 255 and glycine 256. N6-acetyllysine is present on residues glycine 271, tyrosine 272, and lysine 318. A disordered region spans residues 311-332 (QGSTNYGKSQRRGGHQNNYKPY). Arginine 322 is subject to Dimethylated arginine; alternate. Omega-N-methylarginine; alternate is present on arginine 322. Arginine 322 bears the Asymmetric dimethylarginine; alternate mark.

Identified in a IGF2BP1-dependent mRNP granule complex containing untranslated mRNAs. Interacts with APOBEC1. Dimethylation at Arg-322 is probably asymmetric. As to expression, ubiquitous.

It is found in the nucleus. The protein localises to the cytoplasm. Its function is as follows. Binds single-stranded RNA. Has a high affinity for G-rich and U-rich regions of hnRNA. Also binds to APOB mRNA transcripts around the RNA editing site. The sequence is that of Heterogeneous nuclear ribonucleoprotein A/B (HNRNPAB) from Homo sapiens (Human).